We begin with the raw amino-acid sequence, 81 residues long: Protease inhibitor 3 (81 aa).

An N-terminal signal peptide occupies residues 1–24; sequence MSSGCLLLLLGLLTLWAELTPVSG. In terms of domain architecture, BPTI/Kunitz inhibitor spans 29–79; sequence CELPAESGLCNAYIPSFYYNPHSHKCQKFMYGGCGGNANNFKTIVECHRTC. Disulfide bonds link C29/C79, C38/C62, and C54/C75.

The protein belongs to the venom Kunitz-type family. In terms of tissue distribution, expressed by the venom gland.

It is found in the secreted. In terms of biological role, snake venom serine protease inhibitor. This chain is Protease inhibitor 3, found in Walterinnesia aegyptia (Desert black snake).